Here is a 448-residue protein sequence, read N- to C-terminus: Homogentisate 1,2-dioxygenase (448 aa).

The active-site Proton acceptor is H303. The Fe cation site is built by H346 and E352. Y361 and H382 together coordinate homogentisate. Residue H382 participates in Fe cation binding.

Belongs to the homogentisate dioxygenase family. As to quaternary structure, hexamer; dimer of trimers. Fe cation serves as cofactor.

The enzyme catalyses homogentisate + O2 = 4-maleylacetoacetate + H(+). The protein operates within amino-acid degradation; L-phenylalanine degradation; acetoacetate and fumarate from L-phenylalanine: step 4/6. Involved in the catabolism of homogentisate (2,5-dihydroxyphenylacetate or 2,5-OH-PhAc), a central intermediate in the degradation of phenylalanine and tyrosine. Catalyzes the oxidative ring cleavage of the aromatic ring of homogentisate to yield maleylacetoacetate. The protein is Homogentisate 1,2-dioxygenase of Rhodopseudomonas palustris (strain TIE-1).